We begin with the raw amino-acid sequence, 107 residues long: uncharacterized protein (107 aa).

This is an uncharacterized protein from Acidianus bottle-shaped virus (isolate Italy/Pozzuoli) (ABV).